A 183-amino-acid chain; its full sequence is Ubiquitin-conjugating enzyme E2 H (183 aa).

In terms of domain architecture, UBC core spans 1-150 (MSSPSPGKRR…IKEYIQKYAT (150 aa)). Residue lysine 60 is modified to N6-acetyllysine. The Glycyl thioester intermediate role is filled by cysteine 87. Residues 152-183 (EALKEQEEGTGDSSSESSMSDFSEDEAQDMEL) are disordered. The span at 163-172 (DSSSESSMSD) shows a compositional bias: low complexity. Acidic residues predominate over residues 173–183 (FSEDEAQDMEL).

This sequence belongs to the ubiquitin-conjugating enzyme family. Interacts with MAEA and WDR26, components of the CTLH complex that contains GID4, RANBP9 and/or RANBP10, MKLN1, MAEA, RMND5A (or alternatively its paralog RMND5B), GID8, ARMC8, WDR26 and YPEL5. Post-translationally, autoubiquitinated in vitro in the presence of NEDD4L.

It catalyses the reaction S-ubiquitinyl-[E1 ubiquitin-activating enzyme]-L-cysteine + [E2 ubiquitin-conjugating enzyme]-L-cysteine = [E1 ubiquitin-activating enzyme]-L-cysteine + S-ubiquitinyl-[E2 ubiquitin-conjugating enzyme]-L-cysteine.. The enzyme catalyses S-ubiquitinyl-[E1 ubiquitin-activating enzyme]-L-cysteine + [acceptor protein]-L-lysine = [E1 ubiquitin-activating enzyme]-L-cysteine + N(6)-monoubiquitinyl-[acceptor protein]-L-lysine.. It participates in protein modification; protein ubiquitination. Accepts ubiquitin from the E1 complex and catalyzes its covalent attachment to other proteins. E2 ubiquitin conjugating enzyme that transfers ubiquitin to MAEA, a core component of the CTLH E3 ubiquitin-protein ligase complex. In vitro catalyzes 'Lys-11'- and 'Lys-48'-linked polyubiquitination. Capable, in vitro, to ubiquitinate histone H2A. The polypeptide is Ubiquitin-conjugating enzyme E2 H (UBE2H) (Homo sapiens (Human)).